The chain runs to 328 residues: DhaKLM operon coactivator DhaQ (328 aa).

The region spanning Ser-6–Trp-328 is the DhaK domain. Tele-(1,2,3-trihydroxypropan-2-yl)histidine is present on His-215.

As to quaternary structure, homodimer. Interacts with a homodimer of DhaS.

Functionally, coactivator for the transcription factor DhaS. The heterotetramer formed by DhaQ and DhaS functions as a transcriptional regulator. Activated by covalent binding of dihydroxyacetone to DhaQ. The complex activates the dhaKLM operon. The sequence is that of DhaKLM operon coactivator DhaQ (dhaQ) from Lactococcus lactis subsp. lactis (strain IL1403) (Streptococcus lactis).